The following is a 113-amino-acid chain: MHEMSLCEGIRGIVEDQARRHGFAAVKVLRLEIGRFAGVEKAALGFAFDVVMRGSAAEGARLEILDLPGRALCYDCGEEAVIEDRFDPCPLCGGGRLMPVGGDEMRIKDMEVQ.

Residue His2 coordinates Ni(2+). 4 residues coordinate Zn(2+): Cys73, Cys76, Cys89, and Cys92.

The protein belongs to the HypA/HybF family.

In terms of biological role, involved in the maturation of [NiFe] hydrogenases. Required for nickel insertion into the metal center of the hydrogenase. In Cereibacter sphaeroides (strain KD131 / KCTC 12085) (Rhodobacter sphaeroides), this protein is Hydrogenase maturation factor HypA.